The following is a 210-amino-acid chain: Probable GTP-binding protein EngB (210 aa).

The EngB-type G domain occupies 25 to 199 (CGIEVAFAGR…RQKLDSWFSE (175 aa)). GTP contacts are provided by residues 33 to 40 (GRSNAGKS), 60 to 64 (GRTQL), 78 to 81 (DLPG), 145 to 148 (TKAD), and 178 to 180 (FSS). The Mg(2+) site is built by Ser40 and Thr62.

The protein belongs to the TRAFAC class TrmE-Era-EngA-EngB-Septin-like GTPase superfamily. EngB GTPase family. Requires Mg(2+) as cofactor.

Its function is as follows. Necessary for normal cell division and for the maintenance of normal septation. This Salmonella dublin (strain CT_02021853) protein is Probable GTP-binding protein EngB.